We begin with the raw amino-acid sequence, 226 residues long: Cytidylate kinase (226 aa).

Residue 11–19 participates in ATP binding; it reads GPASAGKST.

It belongs to the cytidylate kinase family. Type 1 subfamily.

The protein localises to the cytoplasm. It catalyses the reaction CMP + ATP = CDP + ADP. The enzyme catalyses dCMP + ATP = dCDP + ADP. In Limosilactobacillus fermentum (strain NBRC 3956 / LMG 18251) (Lactobacillus fermentum), this protein is Cytidylate kinase.